A 646-amino-acid chain; its full sequence is Threonine--tRNA ligase (646 aa).

Positions 1–63 (MAQISLTFPD…EADAKIAIHT (63 aa)) constitute a TGS domain. Residues 247-544 (DHRKLGKEME…LIENYAGKLP (298 aa)) are catalytic. 3 residues coordinate Zn(2+): Cys344, His395, and His521.

This sequence belongs to the class-II aminoacyl-tRNA synthetase family. Homodimer. Requires Zn(2+) as cofactor.

The protein localises to the cytoplasm. It catalyses the reaction tRNA(Thr) + L-threonine + ATP = L-threonyl-tRNA(Thr) + AMP + diphosphate + H(+). Functionally, catalyzes the attachment of threonine to tRNA(Thr) in a two-step reaction: L-threonine is first activated by ATP to form Thr-AMP and then transferred to the acceptor end of tRNA(Thr). Also edits incorrectly charged L-seryl-tRNA(Thr). The chain is Threonine--tRNA ligase from Cereibacter sphaeroides (strain ATCC 17025 / ATH 2.4.3) (Rhodobacter sphaeroides).